We begin with the raw amino-acid sequence, 180 residues long: Large ribosomal subunit protein uL6 (180 aa).

This sequence belongs to the universal ribosomal protein uL6 family. As to quaternary structure, part of the 50S ribosomal subunit.

This protein binds to the 23S rRNA, and is important in its secondary structure. It is located near the subunit interface in the base of the L7/L12 stalk, and near the tRNA binding site of the peptidyltransferase center. This is Large ribosomal subunit protein uL6 from Borrelia recurrentis (strain A1).